The chain runs to 465 residues: 5-cytosine rRNA methyltransferase nsun-4 (465 aa).

Residues 1-6 (MSCLRQ) constitute a mitochondrion transit peptide. Residues 106 to 130 (QAIETKRKSVEEKANRETQKVKHEI) are compositionally biased toward basic and acidic residues. The disordered stretch occupies residues 106 to 145 (QAIETKRKSVEEKANRETQKVKHEISNPSTSTNTEDSEPD). S-adenosyl-L-methionine contacts are provided by residues 260-266 (CAAPGGK), D283, D316, and D335. C390 (nucleophile) is an active-site residue.

The protein belongs to the class I-like SAM-binding methyltransferase superfamily. RsmB/NOP family.

The protein localises to the mitochondrion. It carries out the reaction a cytidine in rRNA + S-adenosyl-L-methionine = a 5-methylcytidine in rRNA + S-adenosyl-L-homocysteine + H(+). It catalyses the reaction a cytidine in tRNA + S-adenosyl-L-methionine = a 5-methylcytidine in tRNA + S-adenosyl-L-homocysteine + H(+). Functionally, mitochondrial methyltransferase which methylates cytosine to 5-methylcytosine (m5C) in rRNAs and tRNAs at multiple sites. May play a role in the translation of leucine and proline codons. The sequence is that of 5-cytosine rRNA methyltransferase nsun-4 from Caenorhabditis elegans.